The primary structure comprises 178 residues: Inner membrane-spanning protein YciB (178 aa).

A run of 5 helical transmembrane segments spans residues 12 to 32 (LFFA…VAIV), 50 to 70 (PMQW…LVLH), 74 to 94 (FIMW…LISD), 120 to 140 (LTFA…FVAF), and 145 to 165 (AVWV…FVLA).

This sequence belongs to the YciB family.

It is found in the cell inner membrane. In terms of biological role, plays a role in cell envelope biogenesis, maintenance of cell envelope integrity and membrane homeostasis. The sequence is that of Inner membrane-spanning protein YciB from Laribacter hongkongensis (strain HLHK9).